Consider the following 188-residue polypeptide: Transmembrane protein 160 (188 aa).

A mitochondrion-targeting transit peptide spans 1-96; that stretch reads MGGGWWWARA…ISFMQSDMGR (96 aa). The segment at 25–52 is disordered; it reads PPRPRSGGARGSFAPGHGPRAGASPPPV. Residues 29–38 are compositionally biased toward low complexity; it reads RSGGARGSFA. Phosphoserine is present on Ser48. 2 consecutive transmembrane segments (helical) span residues 102 to 122 and 135 to 155; these read FFLL…VGLA and AAAG…AVGL.

It belongs to the TMEM160 family.

Its subcellular location is the mitochondrion inner membrane. This Bos taurus (Bovine) protein is Transmembrane protein 160.